Consider the following 355-residue polypeptide: Daphnetin O-methyltransferase 1 (355 aa).

S-adenosyl-L-homocysteine-binding residues include Asp-222, Asp-242, and Lys-256. The active-site Proton acceptor is His-260.

This sequence belongs to the class I-like SAM-binding methyltransferase superfamily. Cation-independent O-methyltransferase family. COMT subfamily.

The catalysed reaction is 7,8-dihydroxycoumarin + S-adenosyl-L-methionine = 7-hydroxy-8-methoxycoumarin + S-adenosyl-L-homocysteine + H(+). Its pathway is aromatic compound metabolism. It participates in secondary metabolite biosynthesis. Its function is as follows. O-methyltransferase involved in the biosynthesis of coumarins natural products such as daphnetin derivatives. Catalyzes specifically the methylation of daphnetin (7,8-dihydroxycoumarin) to produce hydrangetin (7-hydroxy-8-methoxycoumarin). Probably involved in acclimation to low temperature conditions. The chain is Daphnetin O-methyltransferase 1 from Secale cereale (Rye).